We begin with the raw amino-acid sequence, 116 residues long: MLQYIPLSNLPYSHIPLHHPSLTISTKCTRIIMHGTCLSGLYPVPFTHNSHDYPHFNIYISFGGPKYCITALNTYVIPLLHRILTTQFIYTYANITKKSPLKSPKHKNILFFNHNT.

The protein belongs to the UPF0320 family.

In Saccharomyces cerevisiae (strain ATCC 204508 / S288c) (Baker's yeast), this protein is Putative UPF0320 protein YJR162C.